Reading from the N-terminus, the 399-residue chain is MLRWLTAGESHGPALIGIVEGVPAGVELTSGQIRDALARRRLGYGRGARMKFEQDEVTIMGGVRHGLTQGGPVAIQVGNTEWPKWEQIMSADPVDPEVLADQARNAPLTRPRPGHADFTGMQKYGFDEARPVLERASARETATRVALGTVAAQFLKQLGIELVSHTVSIASVTVPEGRPLPLPKDVIALDADPLRCFDRETSNAMVAEVDAAHKEGETLGGVVEVLAYGLPPGLGSYVHWDRRLDSRLAAALMGIQAIKGVEVGDGFLTAARRGSAAHDEILKDENGKIVRQTNRAGGIEGGMSIGEVLRVRAAMKPIATVPRALRTIDVSTGEPAKAHHQRSDVCAVPAAGVVAEAMVALVLAEAVAEKFGGDSVPETQRNLQSYLESIPATLDSVGR.

Positions 40 and 46 each coordinate NADP(+). FMN is bound by residues Arg-135 to Ser-137, Gln-256 to Ala-257, Gly-301, Lys-316 to Thr-320, and Arg-342.

This sequence belongs to the chorismate synthase family. Homotetramer. Requires FMNH2 as cofactor.

The catalysed reaction is 5-O-(1-carboxyvinyl)-3-phosphoshikimate = chorismate + phosphate. Its pathway is metabolic intermediate biosynthesis; chorismate biosynthesis; chorismate from D-erythrose 4-phosphate and phosphoenolpyruvate: step 7/7. Its function is as follows. Catalyzes the anti-1,4-elimination of the C-3 phosphate and the C-6 proR hydrogen from 5-enolpyruvylshikimate-3-phosphate (EPSP) to yield chorismate, which is the branch point compound that serves as the starting substrate for the three terminal pathways of aromatic amino acid biosynthesis. This reaction introduces a second double bond into the aromatic ring system. The sequence is that of Chorismate synthase from Paenarthrobacter aurescens (strain TC1).